The sequence spans 256 residues: Major prion protein (256 aa).

The signal sequence occupies residues 1 to 24 (MVKSHIGSWILVLFVAMWSDVGLC). The tract at residues 25–41 (KKRPKPGGGWNTGGSRY) is interaction with ADGRG6. Residues 25-233 (KKRPKPGGGW…ESEAYYQRRA (209 aa)) form an interaction with GRB2, ERI3 and SYN1 region. A disordered region spans residues 28-110 (PKPGGGWNTG…QWNKPSKPKT (83 aa)). A run of 5 repeats spans residues 54 to 62 (PQGGGGWGQ), 63 to 70 (PHGGGWGQ), 71 to 78 (PHGGGWGQ), 79 to 86 (PHGGGWGQ), and 87 to 95 (PHGGGGWGQ). Residues 54–95 (PQGGGGWGQPHGGGWGQPHGGGWGQPHGGGWGQPHGGGGWGQ) form a 5 X 8 AA tandem repeats of P-H-G-G-G-W-G-Q region. Residues 55–97 (QGGGGWGQPHGGGWGQPHGGGWGQPHGGGWGQPHGGGGWGQGG) show a composition bias toward gly residues. Positions 64, 65, 66, 72, 73, 74, 80, 81, 82, 88, 90, and 91 each coordinate Cu(2+). Cysteine 182 and cysteine 217 are disulfide-bonded. Asparagine 184 and asparagine 200 each carry an N-linked (GlcNAc...) asparagine glycan. The GPI-anchor amidated alanine moiety is linked to residue alanine 233. The propeptide at 234–256 (SAILFSSPPVILLISFLIFLIVG) is removed in mature form.

The protein belongs to the prion family. As to quaternary structure, monomer and homodimer. Has a tendency to aggregate into amyloid fibrils containing a cross-beta spine, formed by a steric zipper of superposed beta-strands. Soluble oligomers may represent an intermediate stage on the path to fibril formation. Copper binding may promote oligomerization. Interacts with GRB2, APP, ERI3/PRNPIP and SYN1. Mislocalized cytosolically exposed PrP interacts with MGRN1; this interaction alters MGRN1 subcellular location and causes lysosomal enlargement. Interacts with APP. Interacts with KIAA1191. Interacts with ADGRG6.

It is found in the cell membrane. It localises to the golgi apparatus. Its function is as follows. Its primary physiological function is unclear. May play a role in neuronal development and synaptic plasticity. May be required for neuronal myelin sheath maintenance. May promote myelin homeostasis through acting as an agonist for ADGRG6 receptor. May play a role in iron uptake and iron homeostasis. Soluble oligomers are toxic to cultured neuroblastoma cells and induce apoptosis (in vitro). Association with GPC1 (via its heparan sulfate chains) targets PRNP to lipid rafts. Also provides Cu(2+) or Zn(2+) for the ascorbate-mediated GPC1 deaminase degradation of its heparan sulfate side chains. The polypeptide is Major prion protein (PRNP) (Felis catus (Cat)).